Reading from the N-terminus, the 188-residue chain is GTP cyclohydrolase 1 (188 aa).

Zn(2+)-binding residues include Cys73, His76, and Cys144.

The protein belongs to the GTP cyclohydrolase I family. Homomer.

The enzyme catalyses GTP + H2O = 7,8-dihydroneopterin 3'-triphosphate + formate + H(+). The protein operates within cofactor biosynthesis; 7,8-dihydroneopterin triphosphate biosynthesis; 7,8-dihydroneopterin triphosphate from GTP: step 1/1. The sequence is that of GTP cyclohydrolase 1 from Caldivirga maquilingensis (strain ATCC 700844 / DSM 13496 / JCM 10307 / IC-167).